The primary structure comprises 90 residues: Probable Fe(2+)-trafficking protein (90 aa).

It belongs to the Fe(2+)-trafficking protein family.

In terms of biological role, could be a mediator in iron transactions between iron acquisition and iron-requiring processes, such as synthesis and/or repair of Fe-S clusters in biosynthetic enzymes. This chain is Probable Fe(2+)-trafficking protein, found in Pseudomonas putida (strain W619).